Reading from the N-terminus, the 388-residue chain is 5-hydroxytryptamine receptor 4 (388 aa).

Over 1–19 (MDKLDANVSSKEGFGSVEK) the chain is Extracellular. A glycan (N-linked (GlcNAc...) asparagine) is linked at N7. A helical transmembrane segment spans residues 20–44 (VVLLTFLSAVILMAILGNLLVMVAV). Topologically, residues 45–54 (CRDRQLRKIK) are cytoplasmic. Residues 55–78 (TNYFIVSLAFADLLVSVLVMPFGA) traverse the membrane as a helical segment. Residues 79–92 (IELVQDIWVYGEMF) are Extracellular-facing. A helical transmembrane segment spans residues 93–117 (CLVRTSLDVLLTTASIFHLCCISLD). A disulfide bridge connects residues C93 and C184. A serotonin-binding site is contributed by D100. At 118–133 (RYYAICCQPLVYRNKM) the chain is on the cytoplasmic side. The chain crosses the membrane as a helical span at residues 134-157 (TPLRIALMLGGCWVIPMFISFLPI). At 158-188 (MQGWNNIGIVDLIEKRKFNQNSNSTYCVFMV) the chain is on the extracellular side. Residues 189 to 212 (NKPYAITCSVVAFYIPFLLMVLAY) traverse the membrane as a helical segment. Over 213–257 (YRIYVTAKEHARQIQVLQRAGAPAEGRPQPADQHSTHRMRTETKA) the chain is Cytoplasmic. The helical transmembrane segment at 258-283 (AKTLCIIMGCFCLCWAPFFVTNIVDP) threads the bilayer. N279 serves as a coordination point for serotonin. Residues 284-290 (FIDYTVP) lie on the Extracellular side of the membrane. Residues 291-314 (GQLWTAFLWLGYINSGLNPFLYAF) traverse the membrane as a helical segment. Residues 315–388 (LNKSFRRAFL…PLVAAQPIDT (74 aa)) are Cytoplasmic-facing.

Belongs to the G-protein coupled receptor 1 family. Interacts (via C-terminus 330-346 AA) with GRK5; this interaction is promoted by 5-HT (serotonin).

Its subcellular location is the cell membrane. It is found in the endosome membrane. Its function is as follows. G-protein coupled receptor for 5-hydroxytryptamine (serotonin), a biogenic hormone that functions as a neurotransmitter, a hormone and a mitogen. Ligand binding causes a conformation change that triggers signaling via guanine nucleotide-binding proteins (G proteins) and modulates the activity of downstream effectors. HTR4 is coupled to G(s) G alpha proteins and mediates activation of adenylate cyclase activity. The protein is 5-hydroxytryptamine receptor 4 (HTR4) of Cavia porcellus (Guinea pig).